Consider the following 487-residue polypeptide: N-succinylglutamate 5-semialdehyde dehydrogenase (487 aa).

Residues 1 to 23 (MTHFIKGQWQAGKGHDVTSSNPA) form a disordered region. 220 to 225 (GSSRTG) is an NAD(+) binding site. Residues Glu243 and Cys277 contribute to the active site.

It belongs to the aldehyde dehydrogenase family. AstD subfamily.

It catalyses the reaction N-succinyl-L-glutamate 5-semialdehyde + NAD(+) + H2O = N-succinyl-L-glutamate + NADH + 2 H(+). Its pathway is amino-acid degradation; L-arginine degradation via AST pathway; L-glutamate and succinate from L-arginine: step 4/5. In terms of biological role, catalyzes the NAD-dependent reduction of succinylglutamate semialdehyde into succinylglutamate. This is N-succinylglutamate 5-semialdehyde dehydrogenase from Shewanella sp. (strain ANA-3).